The chain runs to 115 residues: uncharacterized protein (115 aa).

Transmembrane regions (helical) follow at residues 7-27, 40-60, and 72-92; these read TLIF…IWFD, YALT…LLAA, and IVLV…YFYL.

The protein localises to the cell membrane. This is an uncharacterized protein from Haemophilus influenzae (strain ATCC 51907 / DSM 11121 / KW20 / Rd).